The sequence spans 119 residues: MDIVDLVRIEKAYDRYGRKFLERIMTGEEIELCLKKPSPLASIAGRFAAKEAVVKALGTGITAAVHWKSFEVLNDPAGKPFVRSSQPGLLPEGCSIKISIAHDRHSAVATALLCRGPES.

Residues Asp-2 and Glu-51 each contribute to the Mg(2+) site.

This sequence belongs to the P-Pant transferase superfamily. AcpS family. Mg(2+) serves as cofactor.

The protein localises to the cytoplasm. The enzyme catalyses apo-[ACP] + CoA = holo-[ACP] + adenosine 3',5'-bisphosphate + H(+). In terms of biological role, transfers the 4'-phosphopantetheine moiety from coenzyme A to a Ser of acyl-carrier-protein. In Chlorobium luteolum (strain DSM 273 / BCRC 81028 / 2530) (Pelodictyon luteolum), this protein is Holo-[acyl-carrier-protein] synthase.